The following is a 286-amino-acid chain: uncharacterized protein (286 aa).

NAD(+) is bound by residues 4–18 and threonine 95; that span reads AVIG…IARN. Residue lysine 171 is part of the active site. Lysine 239 serves as a coordination point for NAD(+).

It belongs to the HIBADH-related family.

This is an uncharacterized protein from Bacillus subtilis (strain 168).